Consider the following 80-residue polypeptide: Peptide LaIT2 (80 aa).

The signal sequence occupies residues 1 to 21 (MAKHLIVMFLVIMVISSLVDC). The 32-residue stretch at 49–80 (QYGCPIISNMCEDHCRRKKMEGQCDLLDCVCS) folds into the BetaSPN-type CS-alpha/beta domain. Disulfide bonds link Cys52/Cys72, Cys59/Cys77, and Cys63/Cys79.

The protein belongs to the long chain scorpion toxin family. Class 2 subfamily. Expressed by the venom gland.

The protein localises to the secreted. Dual-function toxin that acts both as an insecticidal and an antimicrobial peptide. May inhibit voltage-gated potassium channels (Kv). This amphipathic peptide causes significant antimicrobial activity against E.coli (MIC=7 uM) but does not show any activity against S.aureus even at high concentration. In vivo, causes paralysis or death to crickets. This chain is Peptide LaIT2, found in Liocheles australasiae (Dwarf wood scorpion).